A 178-amino-acid polypeptide reads, in one-letter code: uncharacterized protein (178 aa).

The tract at residues 1–89 (MSAKEGSSHP…GEKKGKTEKL (89 aa)) is disordered. Basic and acidic residues-rich tracts occupy residues 44–53 (PYQKNEKVVV) and 61–89 (AFLHPEEAEAKKESEKPSDGEKKGKTEKL).

This is an uncharacterized protein from Schizosaccharomyces pombe (strain 972 / ATCC 24843) (Fission yeast).